A 470-amino-acid polypeptide reads, in one-letter code: 6-phospho-beta-galactosidase (470 aa).

D-galactose 6-phosphate is bound by residues glutamine 19, histidine 116, asparagine 159, glutamate 160, and asparagine 297. Glutamate 160 functions as the Proton donor in the catalytic mechanism. The active-site Nucleophile is glutamate 375. 4 residues coordinate D-galactose 6-phosphate: serine 430, tryptophan 431, lysine 437, and tyrosine 439.

The protein belongs to the glycosyl hydrolase 1 family.

The enzyme catalyses a 6-phospho-beta-D-galactoside + H2O = D-galactose 6-phosphate + an alcohol. It functions in the pathway carbohydrate metabolism; lactose degradation; D-galactose 6-phosphate and beta-D-glucose from lactose 6-phosphate: step 1/1. The polypeptide is 6-phospho-beta-galactosidase (Staphylococcus aureus (strain MRSA252)).